We begin with the raw amino-acid sequence, 194 residues long: Inosine triphosphate pyrophosphatase (194 aa).

11-16 provides a ligand contact to ITP; that stretch reads TGNAKK. Residue glutamate 39 participates in Mg(2+) binding. Residues lysine 51, 67–68, lysine 84, 143–146, lysine 166, and 171–172 contribute to the ITP site; these read DT, FGWD, and HR.

This sequence belongs to the HAM1 NTPase family. Homodimer. Requires Mg(2+) as cofactor. Mn(2+) is required as a cofactor.

Its subcellular location is the cytoplasm. It carries out the reaction ITP + H2O = IMP + diphosphate + H(+). The catalysed reaction is dITP + H2O = dIMP + diphosphate + H(+). The enzyme catalyses XTP + H2O = XMP + diphosphate + H(+). In terms of biological role, pyrophosphatase that hydrolyzes non-canonical purine nucleotides such as inosine triphosphate (ITP), deoxyinosine triphosphate (dITP) or xanthosine 5'-triphosphate (XTP) to their respective monophosphate derivatives. The enzyme does not distinguish between the deoxy- and ribose forms. Probably excludes non-canonical purines from RNA and DNA precursor pools, thus preventing their incorporation into RNA and DNA and avoiding chromosomal lesions. This chain is Inosine triphosphate pyrophosphatase (itpa), found in Dictyostelium discoideum (Social amoeba).